Reading from the N-terminus, the 133-residue chain is Protein NrdI (133 aa).

The protein belongs to the NrdI family.

Functionally, probably involved in ribonucleotide reductase function. This chain is Protein NrdI, found in Escherichia coli O17:K52:H18 (strain UMN026 / ExPEC).